Consider the following 178-residue polypeptide: Large ribosomal subunit protein uL6 (178 aa).

The protein belongs to the universal ribosomal protein uL6 family. As to quaternary structure, part of the 50S ribosomal subunit.

Functionally, this protein binds to the 23S rRNA, and is important in its secondary structure. It is located near the subunit interface in the base of the L7/L12 stalk, and near the tRNA binding site of the peptidyltransferase center. This Helicobacter acinonychis (strain Sheeba) protein is Large ribosomal subunit protein uL6.